The primary structure comprises 159 residues: Phosphopantetheine adenylyltransferase (159 aa).

Thr10 contacts substrate. Residues 10–11 and His18 contribute to the ATP site; that span reads TF. Residues Lys42, Met74, and Arg88 each contribute to the substrate site. Residues 89 to 91, Glu99, and 124 to 130 each bind ATP; these read GLR and WSFISSS.

This sequence belongs to the bacterial CoaD family. Homohexamer. The cofactor is Mg(2+).

The protein localises to the cytoplasm. The catalysed reaction is (R)-4'-phosphopantetheine + ATP + H(+) = 3'-dephospho-CoA + diphosphate. The protein operates within cofactor biosynthesis; coenzyme A biosynthesis; CoA from (R)-pantothenate: step 4/5. Reversibly transfers an adenylyl group from ATP to 4'-phosphopantetheine, yielding dephospho-CoA (dPCoA) and pyrophosphate. The polypeptide is Phosphopantetheine adenylyltransferase (Salmonella paratyphi A (strain ATCC 9150 / SARB42)).